Reading from the N-terminus, the 323-residue chain is Methionyl-tRNA formyltransferase (323 aa).

A (6S)-5,6,7,8-tetrahydrofolate-binding site is contributed by 115–118; it reads SLLP.

The protein belongs to the Fmt family.

It carries out the reaction L-methionyl-tRNA(fMet) + (6R)-10-formyltetrahydrofolate = N-formyl-L-methionyl-tRNA(fMet) + (6S)-5,6,7,8-tetrahydrofolate + H(+). In terms of biological role, attaches a formyl group to the free amino group of methionyl-tRNA(fMet). The formyl group appears to play a dual role in the initiator identity of N-formylmethionyl-tRNA by promoting its recognition by IF2 and preventing the misappropriation of this tRNA by the elongation apparatus. The chain is Methionyl-tRNA formyltransferase from Lactococcus lactis subsp. cremoris (strain MG1363).